The following is a 296-amino-acid chain: Glycine--tRNA ligase alpha subunit (296 aa).

The protein belongs to the class-II aminoacyl-tRNA synthetase family. As to quaternary structure, tetramer of two alpha and two beta subunits.

It is found in the cytoplasm. It catalyses the reaction tRNA(Gly) + glycine + ATP = glycyl-tRNA(Gly) + AMP + diphosphate. The polypeptide is Glycine--tRNA ligase alpha subunit (Francisella philomiragia subsp. philomiragia (strain ATCC 25017 / CCUG 19701 / FSC 153 / O#319-036)).